A 504-amino-acid polypeptide reads, in one-letter code: Amyloid-beta A4 precursor protein-binding family B member 3 (504 aa).

Residues 29–61 form the WW domain; it reads TGLPPGWRKIRDAAGTYYWHVPSGSTQWQRPTW. 2 consecutive PID domains span residues 111–278 and 283–438; these read EPGA…QVEL and SQAA…RTSS.

In terms of assembly, interacts with APP (via intracellular domain). Interacts with APLP1 and APLP2 (via intracellular domain). As to expression, expressed predominantly in brain and testis.

It localises to the cytoplasm. Its subcellular location is the nucleus. In terms of biological role, may modulate the internalization of amyloid-beta precursor protein. This is Amyloid-beta A4 precursor protein-binding family B member 3 from Rattus norvegicus (Rat).